A 270-amino-acid polypeptide reads, in one-letter code: Monofunctional glycosyltransferase (270 aa).

Positions 1-35 (MKRSDRYKTYNKPNDSNDSNQLHHNTYFKPVNKPQ) are disordered. Residues 11–24 (NKPNDSNDSNQLHH) show a composition bias toward polar residues. Residues 47–67 (LLIPILIIIGIIIGVMYALSL) form a helical membrane-spanning segment.

This sequence belongs to the glycosyltransferase 51 family.

The protein localises to the cell membrane. The enzyme catalyses [GlcNAc-(1-&gt;4)-Mur2Ac(oyl-L-Ala-gamma-D-Glu-L-Lys-D-Ala-D-Ala)](n)-di-trans,octa-cis-undecaprenyl diphosphate + beta-D-GlcNAc-(1-&gt;4)-Mur2Ac(oyl-L-Ala-gamma-D-Glu-L-Lys-D-Ala-D-Ala)-di-trans,octa-cis-undecaprenyl diphosphate = [GlcNAc-(1-&gt;4)-Mur2Ac(oyl-L-Ala-gamma-D-Glu-L-Lys-D-Ala-D-Ala)](n+1)-di-trans,octa-cis-undecaprenyl diphosphate + di-trans,octa-cis-undecaprenyl diphosphate + H(+). The protein operates within cell wall biogenesis; peptidoglycan biosynthesis. Functionally, peptidoglycan polymerase that catalyzes glycan chain elongation using lipid-linked disaccharide-pentapeptide as the substrate. This is Monofunctional glycosyltransferase from Staphylococcus saprophyticus subsp. saprophyticus (strain ATCC 15305 / DSM 20229 / NCIMB 8711 / NCTC 7292 / S-41).